The chain runs to 281 residues: Feruloyl esterase A (281 aa).

An N-terminal signal peptide occupies residues 1-21 (MKQFSAKYALILLATAGQALA). 3 disulfides stabilise this stretch: C50–C279, C112–C115, and C248–C255. Substrate is bound at residue D98. N100 carries N-linked (GlcNAc...) asparagine glycosylation. Position 101 (Y101) interacts with substrate. The active-site Nucleophile is S154. D215 acts as the Charge relay system in catalysis. H268 contacts substrate. Catalysis depends on H268, which acts as the Charge relay system.

In terms of processing, glycosylated.

Its subcellular location is the secreted. It catalyses the reaction feruloyl-polysaccharide + H2O = ferulate + polysaccharide.. Its activity is regulated as follows. Inhibited by the specific serine esterase inhibitor diisopropylfluorophosphate. Involved in degradation of plant cell walls. Hydrolyzes the feruloyl-arabinose ester bond in arabinoxylans, and the feruloyl-galactose ester bond in pectin. Binds to cellulose. This is Feruloyl esterase A (faeA) from Aspergillus niger.